Consider the following 542-residue polypeptide: Chaperonin GroEL (542 aa).

ATP-binding positions include 29-32 (TLGP), 86-90 (DGTTT), Gly413, 476-478 (NAA), and Asp492.

This sequence belongs to the chaperonin (HSP60) family. Forms a cylinder of 14 subunits composed of two heptameric rings stacked back-to-back. Interacts with the co-chaperonin GroES.

It is found in the cytoplasm. It carries out the reaction ATP + H2O + a folded polypeptide = ADP + phosphate + an unfolded polypeptide.. Its function is as follows. Together with its co-chaperonin GroES, plays an essential role in assisting protein folding. The GroEL-GroES system forms a nano-cage that allows encapsulation of the non-native substrate proteins and provides a physical environment optimized to promote and accelerate protein folding. The polypeptide is Chaperonin GroEL (Streptococcus mutans serotype c (strain ATCC 700610 / UA159)).